The primary structure comprises 336 residues: Large ribosomal subunit protein uL3 (336 aa).

3 disordered regions span residues 1–43, 205–230, and 311–336; these read MPQP…QGFA, ITKGKGTQGPVKRWGVQKRKGKHARQ, and RPAVRPGDQPRLDPEVRYVSTASNQG. Positions 219–230 are enriched in basic residues; it reads GVQKRKGKHARQ.

It belongs to the universal ribosomal protein uL3 family. As to quaternary structure, part of the 50S ribosomal subunit. Forms a cluster with proteins L14 and L24e.

One of the primary rRNA binding proteins, it binds directly near the 3'-end of the 23S rRNA, where it nucleates assembly of the 50S subunit. This Natronomonas pharaonis (strain ATCC 35678 / DSM 2160 / CIP 103997 / JCM 8858 / NBRC 14720 / NCIMB 2260 / Gabara) (Halobacterium pharaonis) protein is Large ribosomal subunit protein uL3.